The primary structure comprises 534 residues: Inosine-5'-monophosphate dehydrogenase (534 aa).

CBS domains are found at residues 117–181 (YVMQ…GTPI) and 190–255 (TTPI…PMAS). Residues 292 to 294 (DSS) and 342 to 344 (GMG) each bind NAD(+). Residues Gly344 and Gly346 each contribute to the K(+) site. Ser347 serves as a coordination point for IMP. K(+) is bound at residue Cys349. Catalysis depends on Cys349, which acts as the Thioimidate intermediate. IMP-binding positions include 382–384 (DGG), 405–406 (GG), and 430–434 (YRGMG). The active-site Proton acceptor is Arg448. An IMP-binding site is contributed by Gln461. K(+) contacts are provided by Glu520, Gly521, and Gly522.

This sequence belongs to the IMPDH/GMPR family. In terms of assembly, homotetramer. It depends on K(+) as a cofactor.

It localises to the cytoplasm. The catalysed reaction is IMP + NAD(+) + H2O = XMP + NADH + H(+). It participates in purine metabolism; XMP biosynthesis via de novo pathway; XMP from IMP: step 1/1. Its activity is regulated as follows. Mycophenolic acid (MPA) is a non-competitive inhibitor that prevents formation of the closed enzyme conformation by binding to the same site as the amobile flap. In contrast, mizoribine monophosphate (MZP) is a competitive inhibitor that induces the closed conformation. MPA is a potent inhibitor of mammalian IMPDHs but a poor inhibitor of the bacterial enzymes. MZP is a more potent inhibitor of bacterial IMPDH. Catalyzes the conversion of inosine 5'-phosphate (IMP) to xanthosine 5'-phosphate (XMP), the first committed and rate-limiting step in the de novo synthesis of guanine nucleotides, and therefore plays an important role in the regulation of cell growth. The polypeptide is Inosine-5'-monophosphate dehydrogenase (Caenorhabditis elegans).